Reading from the N-terminus, the 600-residue chain is RNA-binding protein 47 (600 aa).

The span at Met1–Ser25 shows a compositional bias: low complexity. A disordered region spans residues Met1–Gly37. 3 RRM domains span residues Cys82–Asp160, Cys162–Pro244, and Lys257–Pro329.

Belongs to the RRM RBM47 family. Homodimer. May interact with MAVS; may regulate MAVS lysosomal degradation.

It is found in the nucleus. The protein localises to the cytoplasm. Single-stranded RNA-binding protein that functions in a variety of RNA processes, including alternative splicing, RNA stabilization, and RNA editing. Independently of its RNA-binding activity, could negatively regulate MAVS by promoting its lysosomal degradation. This chain is RNA-binding protein 47 (rbm47), found in Danio rerio (Zebrafish).